A 287-amino-acid polypeptide reads, in one-letter code: Formamidopyrimidine-DNA glycosylase (287 aa).

Pro2 acts as the Schiff-base intermediate with DNA in catalysis. Glu3 (proton donor) is an active-site residue. Residue Lys58 is the Proton donor; for beta-elimination activity of the active site. His104, Arg123, and Arg166 together coordinate DNA. Residues 251–287 (RTYDREGQPCRNDGCRGVIGREVQAGRSTFYCPVCQR) form an FPG-type zinc finger. Arg277 functions as the Proton donor; for delta-elimination activity in the catalytic mechanism.

This sequence belongs to the FPG family. In terms of assembly, monomer. Zn(2+) serves as cofactor.

The catalysed reaction is Hydrolysis of DNA containing ring-opened 7-methylguanine residues, releasing 2,6-diamino-4-hydroxy-5-(N-methyl)formamidopyrimidine.. The enzyme catalyses 2'-deoxyribonucleotide-(2'-deoxyribose 5'-phosphate)-2'-deoxyribonucleotide-DNA = a 3'-end 2'-deoxyribonucleotide-(2,3-dehydro-2,3-deoxyribose 5'-phosphate)-DNA + a 5'-end 5'-phospho-2'-deoxyribonucleoside-DNA + H(+). Involved in base excision repair of DNA damaged by oxidation or by mutagenic agents. Acts as a DNA glycosylase that recognizes and removes damaged bases. Has a preference for oxidized purines, such as 7,8-dihydro-8-oxoguanine (8-oxoG). Has AP (apurinic/apyrimidinic) lyase activity and introduces nicks in the DNA strand. Cleaves the DNA backbone by beta-delta elimination to generate a single-strand break at the site of the removed base with both 3'- and 5'-phosphates. In Phenylobacterium zucineum (strain HLK1), this protein is Formamidopyrimidine-DNA glycosylase.